A 183-amino-acid chain; its full sequence is MQAGLSLVCLVLLCSALGEAVLKKPKKQAGTTDTKTDQEPAPIKTKGLKTLDRGWGESIEWVQTYEEGLAKARENNKPLMVIHHLEDCPYSIALKKAFVADRMAQKLAQEDFIMLNLVHPVADENQSPDGHYVPRVIFIDPSLTVRSDLKGRYGNKMYAYDADDIPELITNMKKAKSFLKTEL.

Residues 1–18 (MQAGLSLVCLVLLCSALG) form the signal peptide.

Belongs to the AGR family. From stage 18 (neurula) onward, expressed in the cement gland until it degenerates. More weakly expressed in the adjacent hatching gland.

It localises to the secreted. Does not appear to be required for cement gland formation. The protein is Anterior gradient protein 1 (ag1) of Xenopus laevis (African clawed frog).